The primary structure comprises 102 residues: Large ribosomal subunit protein bL21 (102 aa).

It belongs to the bacterial ribosomal protein bL21 family. Part of the 50S ribosomal subunit. Contacts protein L20.

In terms of biological role, this protein binds to 23S rRNA in the presence of protein L20. The chain is Large ribosomal subunit protein bL21 from Geobacter sulfurreducens (strain ATCC 51573 / DSM 12127 / PCA).